The following is a 519-amino-acid chain: 2-isopropylmalate synthase (519 aa).

A Pyruvate carboxyltransferase domain is found at 5 to 267 (VIIFDTTLRD…YTNIHHHEIY (263 aa)). Residues Asp14, His202, His204, and Asn238 each contribute to the Mn(2+) site. Residues 392–519 (ALESFHIHST…NHKNTQHIKK (128 aa)) are regulatory domain.

It belongs to the alpha-IPM synthase/homocitrate synthase family. LeuA type 1 subfamily. In terms of assembly, homodimer. Mn(2+) serves as cofactor.

The protein localises to the cytoplasm. It carries out the reaction 3-methyl-2-oxobutanoate + acetyl-CoA + H2O = (2S)-2-isopropylmalate + CoA + H(+). It functions in the pathway amino-acid biosynthesis; L-leucine biosynthesis; L-leucine from 3-methyl-2-oxobutanoate: step 1/4. Its function is as follows. Catalyzes the condensation of the acetyl group of acetyl-CoA with 3-methyl-2-oxobutanoate (2-ketoisovalerate) to form 3-carboxy-3-hydroxy-4-methylpentanoate (2-isopropylmalate). The protein is 2-isopropylmalate synthase of Blochmanniella floridana.